A 201-amino-acid polypeptide reads, in one-letter code: Ribosome maturation factor RimP (201 aa).

A disordered region spans residues leucine 180–leucine 201. The span at glutamine 188–leucine 201 shows a compositional bias: acidic residues.

The protein belongs to the RimP family.

The protein resides in the cytoplasm. Required for maturation of 30S ribosomal subunits. This is Ribosome maturation factor RimP from Methylobacterium sp. (strain 4-46).